The chain runs to 106 residues: Large ribosomal subunit protein P2A (106 aa).

Lys-2 is covalently cross-linked (Glycyl lysine isopeptide (Lys-Gly) (interchain with G-Cter in ubiquitin)). Phosphothreonine is present on Thr-16. 2 positions are modified to phosphoserine: Ser-40 and Ser-43. Lys-48 is covalently cross-linked (Glycyl lysine isopeptide (Lys-Gly) (interchain with G-Cter in ubiquitin)). Phosphoserine is present on Ser-49. Residues 65-82 show a composition bias toward low complexity; that stretch reads PAAGPASAGGAAAASGDA. A disordered region spans residues 65 to 106; that stretch reads PAAGPASAGGAAAASGDAAAEEEKEEEAAEESDDDMGFGLFD. Positions 83-100 are enriched in acidic residues; it reads AAEEEKEEEAAEESDDDM. A Phosphoserine modification is found at Ser-96.

The protein belongs to the eukaryotic ribosomal protein P1/P2 family. In terms of assembly, component of the large ribosomal subunit (LSU). Mature yeast ribosomes consist of a small (40S) and a large (60S) subunit. The 40S small subunit contains 1 molecule of ribosomal RNA (18S rRNA) and 33 different proteins (encoded by 57 genes). The large 60S subunit contains 3 rRNA molecules (25S, 5.8S and 5S rRNA) and 46 different proteins (encoded by 81 genes). The 5 acidic ribosomal P-proteins form the stalk structure of the 60S subunit. They are organized as a pentameric complex in which uL10/P0 interacts with 2 heterodimers, P1A-P2B and P1B-P2A. In terms of processing, phosphorylation is not involved in the interaction of the acidic P proteins with the ribosome, however it is suggested to affect the ribosome activity and to participate in a possible ribosome regulatory mechanism. Post-translationally, the N-terminus is not modified.

The protein localises to the cytoplasm. Its function is as follows. Component of the ribosome, a large ribonucleoprotein complex responsible for the synthesis of proteins in the cell. The small ribosomal subunit (SSU) binds messenger RNAs (mRNAs) and translates the encoded message by selecting cognate aminoacyl-transfer RNA (tRNA) molecules. The large subunit (LSU) contains the ribosomal catalytic site termed the peptidyl transferase center (PTC), which catalyzes the formation of peptide bonds, thereby polymerizing the amino acids delivered by tRNAs into a polypeptide chain. The nascent polypeptides leave the ribosome through a tunnel in the LSU and interact with protein factors that function in enzymatic processing, targeting, and the membrane insertion of nascent chains at the exit of the ribosomal tunnel. The chain is Large ribosomal subunit protein P2A from Saccharomyces cerevisiae (strain ATCC 204508 / S288c) (Baker's yeast).